The sequence spans 581 residues: mRNA-decapping enzyme 1B (581 aa).

Residue Ser145 is modified to Phosphoserine. 2 disordered regions span residues 181-222 and 236-258; these read QISS…PEPQ and APCQ…PEKF. The span at 204–219 shows a compositional bias: polar residues; that stretch reads GSRQQRGPRPGQTSDP. Residues 244 to 255 are compositionally biased toward low complexity; that stretch reads PPQTLPLQQQQP. Phosphoserine is present on residues Ser269 and Ser326. Positions 349–411 are disordered; that stretch reads AENRCEPGAP…HQPVTGPGEV (63 aa). Residues 355 to 367 are compositionally biased toward low complexity; the sequence is PGAPAPASSATTP. Thr366 bears the Phosphothreonine mark. Over residues 368–381 the composition is skewed to polar residues; that stretch reads VSLAQPTRLSSALP. Residues 382 to 401 show a composition bias toward pro residues; sequence PQTPGPRALPRPAPPGPGPG. Ser412 carries the phosphoserine modification. The tract at residues 427–468 is disordered; that stretch reads QQLPAPGRPALAAKFPTATLSTRARNPLEPWRDPPPSTEQPA. Ser475 is modified (phosphoserine). Residues 498-522 form a disordered region; that stretch reads SWAPPQERSRAPLPPGNQDPAATPT.

It belongs to the DCP1 family. Interacts with DCP1A.

The protein localises to the cytoplasm. It is found in the nucleus. The catalysed reaction is a 5'-end (N(7)-methyl 5'-triphosphoguanosine)-ribonucleoside in mRNA + H2O = N(7)-methyl-GDP + a 5'-end phospho-ribonucleoside in mRNA + 2 H(+). Its function is as follows. May play a role in the degradation of mRNAs, both in normal mRNA turnover and in nonsense-mediated mRNA decay. May remove the 7-methyl guanine cap structure from mRNA molecules, yielding a 5'-phosphorylated mRNA fragment and 7m-GDP. The sequence is that of mRNA-decapping enzyme 1B (DCP1B) from Bos taurus (Bovine).